A 100-amino-acid polypeptide reads, in one-letter code: Elevenin-Vc1 (100 aa).

The signal sequence occupies residues 1-24 (MAPSQKALLVLVLSMLLTASDSWA). Cys29 and Cys38 are oxidised to a cystine. The propeptide occupies 44–100 (KRGGDSLSVGGSAELDDALTDPFLRSEEPREWRELTRLSRVLQTFLSHPTGETEQHD).

It belongs to the elevenin family. Monomer. In terms of tissue distribution, expressed by the venom duct.

The protein resides in the secreted. Functionally, may mimic the function of prey elevenin neuropeptide. In vivo, intracranial injection in mice induces hyperactivity (tested at 5 and 10 nM). The protein is Elevenin-Vc1 of Conus victoriae (Queen Victoria cone).